The chain runs to 364 residues: Phosphoserine aminotransferase (364 aa).

R42 serves as a coordination point for L-glutamate. Pyridoxal 5'-phosphate is bound by residues 76–77, W100, T150, D169, and Q192; that span reads AS. K193 bears the N6-(pyridoxal phosphate)lysine mark. Pyridoxal 5'-phosphate is bound at residue 234 to 235; the sequence is NT.

The protein belongs to the class-V pyridoxal-phosphate-dependent aminotransferase family. SerC subfamily. Homodimer. The cofactor is pyridoxal 5'-phosphate.

Its subcellular location is the cytoplasm. It catalyses the reaction O-phospho-L-serine + 2-oxoglutarate = 3-phosphooxypyruvate + L-glutamate. The catalysed reaction is 4-(phosphooxy)-L-threonine + 2-oxoglutarate = (R)-3-hydroxy-2-oxo-4-phosphooxybutanoate + L-glutamate. The protein operates within amino-acid biosynthesis; L-serine biosynthesis; L-serine from 3-phospho-D-glycerate: step 2/3. In terms of biological role, catalyzes the reversible conversion of 3-phosphohydroxypyruvate to phosphoserine and of 3-hydroxy-2-oxo-4-phosphonooxybutanoate to phosphohydroxythreonine. This chain is Phosphoserine aminotransferase, found in Shouchella clausii (strain KSM-K16) (Alkalihalobacillus clausii).